The following is a 241-amino-acid chain: uncharacterized protein (241 aa).

It localises to the cytoplasm. Its subcellular location is the nucleus. This is an uncharacterized protein from Schizosaccharomyces pombe (strain 972 / ATCC 24843) (Fission yeast).